The following is a 126-amino-acid chain: MAEAGAGLSETVTETTVTVTTEPENRSLTIKLRKRKPEKKVEWTSDTVDNEHMGRRSSKCCCIYEKPRAFGESSTESDEEEEEGCGHTHCVRGHRKGRRRATLGPTPTTPPQPPDPSQPPPGPMQH.

A disordered region spans residues Met1–Asn25. The residue at position 2 (Ala2) is an N-acetylalanine. Residues Glu10–Glu22 show a composition bias toward low complexity. The tract at residues His52–Cys62 is atypical RING finger domain 1. The interval Phe70 to His126 is disordered. A phosphoserine mark is found at Ser73 and Ser74. Phosphothreonine is present on Thr75. Position 77 is a phosphoserine (Ser77). Positions Cys85–His94 are atypical RING finger domain 2. Residues His89–Ala101 show a composition bias toward basic residues. The span at Pro107 to His126 shows a compositional bias: pro residues. Thr109 is modified (phosphothreonine).

Interacts with TLR2 and UBE2D2. Auto-ubiquitinated. As to expression, widely expressed.

The enzyme catalyses S-ubiquitinyl-[E2 ubiquitin-conjugating enzyme]-L-cysteine + [acceptor protein]-L-lysine = [E2 ubiquitin-conjugating enzyme]-L-cysteine + N(6)-ubiquitinyl-[acceptor protein]-L-lysine.. It participates in protein modification; protein ubiquitination. Functionally, atypical E3 ubiquitin-protein ligase which ubiquitinates TLR2 at 'Lys-754' leading to its degradation by the proteasome. Plays a role in regulating inflammatory cytokine release and gram-positive bacterial clearance by functioning, in part, through the ubiquitination and degradation of TLR2. Inhibitor of protein phosphatase 1. This Homo sapiens (Human) protein is E3 ubiquitin-protein ligase PPP1R11 (PPP1R11).